Reading from the N-terminus, the 322-residue chain is Probable ethanolamine-phosphate cytidylyltransferase (322 aa).

It belongs to the cytidylyltransferase family.

The catalysed reaction is phosphoethanolamine + CTP + H(+) = CDP-ethanolamine + diphosphate. Its pathway is phospholipid metabolism; phosphatidylethanolamine biosynthesis; phosphatidylethanolamine from ethanolamine: step 2/3. This chain is Probable ethanolamine-phosphate cytidylyltransferase (MUQ1), found in Encephalitozoon cuniculi (strain GB-M1) (Microsporidian parasite).